The primary structure comprises 260 residues: MVLIKVLANLLILQLSYAQKSSELIIGGDECNINEHRFLVALYTSRTLFCGGTLINQEWVLTAAHCNMEDIQIKLGMHSKKVPNEDEQKRVPKEKFFCLSSKNYTLWDKDIMLIRLDSPVKNSAHIAPLSLPSSPPSVGSVCRTMGWGRISSTKETYPDVPHCVNINLLEYEMCRAPYPEFELPATSRTLCAGILEGGKDTCVGDSGGPLICNGQFQGIASWGDDPCAQPHKPAAYTKVFDHLDWIENIIAGNTDASCPP.

An N-terminal signal peptide occupies residues 1–18; sequence MVLIKVLANLLILQLSYA. Positions 19-24 are excised as a propeptide; it reads QKSSEL. The Peptidase S1 domain maps to 25–251; the sequence is IIGGDECNIN…HLDWIENIIA (227 aa). Cystine bridges form between cysteine 31-cysteine 163, cysteine 50-cysteine 66, cysteine 98-cysteine 258, cysteine 142-cysteine 212, cysteine 174-cysteine 191, and cysteine 202-cysteine 227. Catalysis depends on histidine 65, which acts as the Charge relay system. N-linked (GlcNAc...) asparagine glycosylation is present at asparagine 103. Aspartate 110 (charge relay system) is an active-site residue. The active-site Charge relay system is serine 206.

It belongs to the peptidase S1 family. Snake venom subfamily. In terms of assembly, monomer. Expressed by the venom gland.

The protein localises to the secreted. In terms of biological role, snake venom serine protease that may act in the hemostasis system of the prey. This chain is Snake venom serine protease pallabin-2 (JZTHR7), found in Gloydius halys (Chinese water mocassin).